A 375-amino-acid polypeptide reads, in one-letter code: 23S rRNA (uracil(747)-C(5))-methyltransferase RlmC (375 aa).

Positions 3, 11, 14, and 87 each coordinate [4Fe-4S] cluster. 4 residues coordinate S-adenosyl-L-methionine: Gln-212, Phe-241, Glu-262, and Asn-307. The Nucleophile role is filled by Cys-334.

Belongs to the class I-like SAM-binding methyltransferase superfamily. RNA M5U methyltransferase family. RlmC subfamily.

It carries out the reaction uridine(747) in 23S rRNA + S-adenosyl-L-methionine = 5-methyluridine(747) in 23S rRNA + S-adenosyl-L-homocysteine + H(+). Catalyzes the formation of 5-methyl-uridine at position 747 (m5U747) in 23S rRNA. In Serratia proteamaculans (strain 568), this protein is 23S rRNA (uracil(747)-C(5))-methyltransferase RlmC.